We begin with the raw amino-acid sequence, 700 residues long: Elongation factor G (700 aa).

A tr-type G domain is found at 10–285 (DRTRNIGIMA…AVIDYLPSPL (276 aa)). Residues 19 to 26 (AHIDAGKT), 83 to 87 (DTPGH), and 137 to 140 (NKMD) contribute to the GTP site.

This sequence belongs to the TRAFAC class translation factor GTPase superfamily. Classic translation factor GTPase family. EF-G/EF-2 subfamily.

It is found in the cytoplasm. Functionally, catalyzes the GTP-dependent ribosomal translocation step during translation elongation. During this step, the ribosome changes from the pre-translocational (PRE) to the post-translocational (POST) state as the newly formed A-site-bound peptidyl-tRNA and P-site-bound deacylated tRNA move to the P and E sites, respectively. Catalyzes the coordinated movement of the two tRNA molecules, the mRNA and conformational changes in the ribosome. The polypeptide is Elongation factor G (Lacticaseibacillus paracasei (strain ATCC 334 / BCRC 17002 / CCUG 31169 / CIP 107868 / KCTC 3260 / NRRL B-441) (Lactobacillus paracasei)).